We begin with the raw amino-acid sequence, 655 residues long: p-hydroxybenzoic acid efflux pump subunit AaeB (655 aa).

A run of 11 helical transmembrane segments spans residues 13 to 33 (FAVK…HFQL), 38 to 58 (WAVL…GGEP), 69 to 89 (LRII…IAMI), 93 to 113 (LLMI…SSLV), 121 to 141 (WGLA…EPLL), 152 to 172 (EIVI…PRSI), 370 to 390 (LFWL…IAVV), 407 to 427 (FIYG…VIIP), 431 to 451 (QSML…GIEV), 459 to 479 (MGAL…TFHF), and 482 to 502 (FLDS…VILL).

This sequence belongs to the aromatic acid exporter ArAE (TC 2.A.85) family.

It is found in the cell inner membrane. In terms of biological role, forms an efflux pump with AaeA. Could function as a metabolic relief valve, allowing to eliminate certain compounds when they accumulate to high levels in the cell. The chain is p-hydroxybenzoic acid efflux pump subunit AaeB from Shigella boydii serotype 18 (strain CDC 3083-94 / BS512).